The chain runs to 741 residues: Ethylene receptor (741 aa).

The next 3 membrane-spanning stretches (helical) occupy residues 23 to 43, 53 to 73, and 92 to 112; these read ISDF…IYFV, WVLV…LINL, and VLTA…IPDL. Residues Cys65 and His69 each contribute to the Cu cation site. Residues 158 to 307 enclose the GAF domain; it reads DRHTILKTTL…VVADQVAVAL (150 aa). The region spanning 350-589 is the Histidine kinase domain; sequence VMNHEMRTPM…TFIVKLGFPE (240 aa). His353 is modified (phosphohistidine; by autocatalysis). The Response regulatory domain maps to 615-732; that stretch reads KVLVMDDNGV…KMRSVLSELL (118 aa). Position 663 is a 4-aspartylphosphate (Asp663).

It belongs to the ethylene receptor family. As to quaternary structure, homodimer; disulfide-linked. Requires Cu cation as cofactor. Post-translationally, activation probably requires a transfer of a phosphate group between a His in the transmitter domain and an Asp of the receiver domain.

The protein localises to the endoplasmic reticulum membrane. The catalysed reaction is ATP + protein L-histidine = ADP + protein N-phospho-L-histidine.. Functionally, may act early in the ethylene signal transduction pathway, possibly as an ethylene receptor, or as a regulator of the pathway. This Malus domestica (Apple) protein is Ethylene receptor (ETR1).